Here is a 374-residue protein sequence, read N- to C-terminus: Mitochondrial import inner membrane translocase subunit tim50 (374 aa).

Residues 1–48 (MILNKVAKCYGKQIGFFGNKTTQFIKPNQTIFLIGGTKRLFTTQQQQS) constitute a mitochondrion transit peptide. Residues 42–97 (TTQQQQSPKKEEPKSEQQKKVEDKTEEKEKEKDEEENENEKEKENEDGEGQKKKSK) are disordered. Basic and acidic residues-rich tracts occupy residues 49 to 72 (PKKE…KEKE) and 81 to 93 (EKEK…EGQK). The chain crosses the membrane as a helical span at residues 103-125 (IVTSVTSTFFAGVLVASTFGYLT). The FCP1 homology domain occupies 191–332 (PGGKKYTLVI…IELLPVLESF (142 aa)).

The protein belongs to the TIM50 family. In terms of assembly, component of the mitochondrial import inner membrane translocase complex.

The protein localises to the mitochondrion inner membrane. Functionally, component of the mitochondrial import inner membrane translocase that mediates the translocation of transit peptide-containing proteins across the mitochondrial inner membrane. This Dictyostelium discoideum (Social amoeba) protein is Mitochondrial import inner membrane translocase subunit tim50 (timm50).